Reading from the N-terminus, the 73-residue chain is UPF0154 protein MG335.1 homolog (73 aa).

Residues 6–26 form a helical membrane-spanning segment; the sequence is LALGLGIPLSLLVGVIIGYFI.

Belongs to the UPF0154 family.

The protein localises to the membrane. The sequence is that of UPF0154 protein MG335.1 homolog from Mycoplasma pneumoniae (strain ATCC 29342 / M129 / Subtype 1) (Mycoplasmoides pneumoniae).